A 682-amino-acid polypeptide reads, in one-letter code: DNA ligase (682 aa).

Residues 42–46 (DAEYD), 91–92 (SL), and E124 contribute to the NAD(+) site. The N6-AMP-lysine intermediate role is filled by K126. R147, E184, K302, and K326 together coordinate NAD(+). Residues C420, C423, C438, and C444 each coordinate Zn(2+). The 80-residue stretch at 603-682 (IADNPLKGKS…QEFIALTGEN (80 aa)) folds into the BRCT domain.

Belongs to the NAD-dependent DNA ligase family. LigA subfamily. It depends on Mg(2+) as a cofactor. The cofactor is Mn(2+).

The catalysed reaction is NAD(+) + (deoxyribonucleotide)n-3'-hydroxyl + 5'-phospho-(deoxyribonucleotide)m = (deoxyribonucleotide)n+m + AMP + beta-nicotinamide D-nucleotide.. In terms of biological role, DNA ligase that catalyzes the formation of phosphodiester linkages between 5'-phosphoryl and 3'-hydroxyl groups in double-stranded DNA using NAD as a coenzyme and as the energy source for the reaction. It is essential for DNA replication and repair of damaged DNA. This Actinobacillus pleuropneumoniae serotype 3 (strain JL03) protein is DNA ligase.